A 1065-amino-acid polypeptide reads, in one-letter code: DNA ligase 4 (1065 aa).

The segment at 1–20 is disordered; sequence MAVHAPYNHAPPPTQEINGQ. Glu295, Lys297, Leu298, Arg302, Glu357, Phe387, Glu452, Lys457, Lys474, and Lys476 together coordinate ATP. The active-site N6-AMP-lysine intermediate is Lys297. Residue Glu357 participates in Mg(2+) binding. Residue Glu452 participates in Mg(2+) binding. The BRCT 1 domain maps to 696–775; it reads VETSIFSDMT…TALPFLKEFL (80 aa). A disordered region spans residues 825–928; sequence GEDKDEIDVE…SDVGVNGDDY (104 aa). 2 stretches are compositionally biased toward basic and acidic residues: residues 834–864 and 886–900; these read EESRESKNRRMAREDLKEKESNRTLEQKKLQ and MSLKEESDTDSERSR. The 111-residue stretch at 954-1064 folds into the BRCT 2 domain; it reads DEDRIFYHLA…TLLDEDLYKP (111 aa).

It belongs to the ATP-dependent DNA ligase family. Requires Mg(2+) as cofactor.

It localises to the nucleus. The catalysed reaction is ATP + (deoxyribonucleotide)n-3'-hydroxyl + 5'-phospho-(deoxyribonucleotide)m = (deoxyribonucleotide)n+m + AMP + diphosphate.. DNA ligase involved in DNA non-homologous end joining (NHEJ); required for double-strand break (DSB) repair. In Cryptococcus neoformans var. neoformans serotype D (strain B-3501A) (Filobasidiella neoformans), this protein is DNA ligase 4 (LIG4).